Reading from the N-terminus, the 289-residue chain is Protoheme IX farnesyltransferase (289 aa).

Transmembrane regions (helical) follow at residues 9–29, 40–60, 89–109, 110–130, 134–154, 155–175, 190–209, 228–248, and 269–289; these read VALM…PVMM, LIAV…TINC, LTFG…LVNW, PSAL…TLGL, TPSN…IGWS, AVTG…FFWT, YAAA…VVTR, VAST…WFLV, and FHMS…TALV.

It belongs to the UbiA prenyltransferase family. Protoheme IX farnesyltransferase subfamily.

Its subcellular location is the cell membrane. It catalyses the reaction heme b + (2E,6E)-farnesyl diphosphate + H2O = Fe(II)-heme o + diphosphate. It functions in the pathway porphyrin-containing compound metabolism; heme O biosynthesis; heme O from protoheme: step 1/1. Its function is as follows. Converts heme B (protoheme IX) to heme O by substitution of the vinyl group on carbon 2 of heme B porphyrin ring with a hydroxyethyl farnesyl side group. The chain is Protoheme IX farnesyltransferase from Frankia casuarinae (strain DSM 45818 / CECT 9043 / HFP020203 / CcI3).